A 372-amino-acid polypeptide reads, in one-letter code: Phospho-N-acetylmuramoyl-pentapeptide-transferase (372 aa).

10 helical membrane-spanning segments follow: residues 25 to 45 (RSLL…PVMI), 73 to 93 (TMGG…WADL), 98 to 118 (VWIV…DDWI), 134 to 154 (FFWT…IAQN), 176 to 196 (SIPL…YLVI), 211 to 231 (GLAI…AYLA), 251 to 271 (LVVI…YNAH), 275 to 295 (IFMG…IAVM), 300 to 320 (IVFA…FLQI), and 349 to 369 (QVVT…LMTL).

This sequence belongs to the glycosyltransferase 4 family. MraY subfamily. Mg(2+) serves as cofactor.

Its subcellular location is the cell inner membrane. It catalyses the reaction UDP-N-acetyl-alpha-D-muramoyl-L-alanyl-gamma-D-glutamyl-meso-2,6-diaminopimeloyl-D-alanyl-D-alanine + di-trans,octa-cis-undecaprenyl phosphate = di-trans,octa-cis-undecaprenyl diphospho-N-acetyl-alpha-D-muramoyl-L-alanyl-D-glutamyl-meso-2,6-diaminopimeloyl-D-alanyl-D-alanine + UMP. The protein operates within cell wall biogenesis; peptidoglycan biosynthesis. Catalyzes the initial step of the lipid cycle reactions in the biosynthesis of the cell wall peptidoglycan: transfers peptidoglycan precursor phospho-MurNAc-pentapeptide from UDP-MurNAc-pentapeptide onto the lipid carrier undecaprenyl phosphate, yielding undecaprenyl-pyrophosphoryl-MurNAc-pentapeptide, known as lipid I. The polypeptide is Phospho-N-acetylmuramoyl-pentapeptide-transferase (Acinetobacter baylyi (strain ATCC 33305 / BD413 / ADP1)).